Here is a 298-residue protein sequence, read N- to C-terminus: Acetylglutamate kinase (298 aa).

Residues 69–70, arginine 91, and asparagine 196 each bind substrate; that span reads GG.

Belongs to the acetylglutamate kinase family. ArgB subfamily.

The protein resides in the cytoplasm. The catalysed reaction is N-acetyl-L-glutamate + ATP = N-acetyl-L-glutamyl 5-phosphate + ADP. It participates in amino-acid biosynthesis; L-arginine biosynthesis; N(2)-acetyl-L-ornithine from L-glutamate: step 2/4. Catalyzes the ATP-dependent phosphorylation of N-acetyl-L-glutamate. The polypeptide is Acetylglutamate kinase (Granulibacter bethesdensis (strain ATCC BAA-1260 / CGDNIH1)).